Here is a 487-residue protein sequence, read N- to C-terminus: Probable cobyric acid synthase (487 aa).

The region spanning 249–435 (DVDIAVVRFP…LHGIFNNASF (187 aa)) is the GATase cobBQ-type domain. Catalysis depends on Cys-328, which acts as the Nucleophile. His-427 is an active-site residue.

It belongs to the CobB/CobQ family. CobQ subfamily.

Its pathway is cofactor biosynthesis; adenosylcobalamin biosynthesis. In terms of biological role, catalyzes amidations at positions B, D, E, and G on adenosylcobyrinic A,C-diamide. NH(2) groups are provided by glutamine, and one molecule of ATP is hydrogenolyzed for each amidation. The polypeptide is Probable cobyric acid synthase (Methanocella arvoryzae (strain DSM 22066 / NBRC 105507 / MRE50)).